The chain runs to 337 residues: MNAPSLPRLAMVLGDPAGIGPELIARLLADTEVREKAHIVLIADEAEMRRGMRIAGCEFPYRRIDALETLDFADATPLLHPWLSQGGDEFPRSEASAVGGRYSLETLALALELTRSGRTDAILFGPLNKTSLHMAGMDHSDELHWFAERLGFGGPFCEFNVLDDLWTSRVTSHVALAEVPGLLSQERVGEAIRLIDDALRRSGLARPRIGVCGLNPHNGDNGSFGREELDIIAPAVQKAREQGIAADGPYPADTIFLKVQGDARAFDAVVTMYHDQGQIAIKLMGFSRGVTVQGGLPIPIATPAHGTAFDIAGQGRADVGATRQAFEIACRMGRHKA.

A divalent metal cation is bound by residues His-173, His-217, and His-274.

This sequence belongs to the PdxA family. Homodimer. It depends on Zn(2+) as a cofactor. The cofactor is Mg(2+). Co(2+) is required as a cofactor.

The protein localises to the cytoplasm. The enzyme catalyses 4-(phosphooxy)-L-threonine + NAD(+) = 3-amino-2-oxopropyl phosphate + CO2 + NADH. Its pathway is cofactor biosynthesis; pyridoxine 5'-phosphate biosynthesis; pyridoxine 5'-phosphate from D-erythrose 4-phosphate: step 4/5. Its function is as follows. Catalyzes the NAD(P)-dependent oxidation of 4-(phosphooxy)-L-threonine (HTP) into 2-amino-3-oxo-4-(phosphooxy)butyric acid which spontaneously decarboxylates to form 3-amino-2-oxopropyl phosphate (AHAP). The sequence is that of Putative 4-hydroxythreonine-4-phosphate dehydrogenase 2 from Pseudomonas aeruginosa (strain ATCC 15692 / DSM 22644 / CIP 104116 / JCM 14847 / LMG 12228 / 1C / PRS 101 / PAO1).